The sequence spans 119 residues: MGMKIVGRERRKLRIRKKVEGTPERPRLSVFRSSKHIYAQVIDDVSGKTLAHASTLSKDLKGSLDEDNKVEAAKKVGALIARICKERQIDKVVFDRNGYLYHGRVSALAQAAREAGLDF.

The protein belongs to the universal ribosomal protein uL18 family. As to quaternary structure, part of the 50S ribosomal subunit; part of the 5S rRNA/L5/L18/L25 subcomplex. Contacts the 5S and 23S rRNAs.

Functionally, this is one of the proteins that bind and probably mediate the attachment of the 5S RNA into the large ribosomal subunit, where it forms part of the central protuberance. The chain is Large ribosomal subunit protein uL18 from Sorangium cellulosum (strain So ce56) (Polyangium cellulosum (strain So ce56)).